The following is a 208-amino-acid chain: MTNNLIAKAAIDRRLAEIVSPVIADLGYELVRIRLMSGKSTTLQIMADKPDGGIEVDDCAAISNAVSATLDVEDPILDAYTLEVSSPGIDRPLTRLKDFEMFEGYEAKIETTEMIDGRRRFRGELAGIEGNEVLINLDQNGETVTIGLEFDWLSDAKLVLTDDLIKEMLRQRKAAGVLNEDQFDEIVEEAPETGATTMARDGSEEETK.

The interval 189 to 208 (EAPETGATTMARDGSEEETK) is disordered.

Belongs to the RimP family.

The protein localises to the cytoplasm. Required for maturation of 30S ribosomal subunits. The chain is Ribosome maturation factor RimP from Ruegeria pomeroyi (strain ATCC 700808 / DSM 15171 / DSS-3) (Silicibacter pomeroyi).